The primary structure comprises 182 residues: dTTP/UTP pyrophosphatase (182 aa).

Residue aspartate 64 is the Proton acceptor of the active site.

This sequence belongs to the Maf family. YhdE subfamily. A divalent metal cation serves as cofactor.

The protein resides in the cytoplasm. It carries out the reaction dTTP + H2O = dTMP + diphosphate + H(+). The enzyme catalyses UTP + H2O = UMP + diphosphate + H(+). In terms of biological role, nucleoside triphosphate pyrophosphatase that hydrolyzes dTTP and UTP. May have a dual role in cell division arrest and in preventing the incorporation of modified nucleotides into cellular nucleic acids. The sequence is that of dTTP/UTP pyrophosphatase from Thermosipho melanesiensis (strain DSM 12029 / CIP 104789 / BI429).